The sequence spans 637 residues: Transcription termination factor FttA (637 aa).

The tract at residues 4–71 (EDVLLDLKHK…IAMRPDPRVL (68 aa)) is KHa. Residues 72–139 (ATPEDSISII…WIPKVVRTPP (68 aa)) are KHb. Residues 180–383 (WVRVTALGGC…VISEATYGNA (204 aa)) form a metallo-beta-lactamase N-terminus region. Zn(2+) is bound by residues His242, His244, Asp246, His247, His329, and Asp352. The tract at residues 384-578 (NAFQPALKDA…MEVQVVDGFS (195 aa)) is beta-Casp. The metallo-beta-lactamase C-terminus stretch occupies residues 579-637 (GHSDRRQLMEYVKRMQPRPERVFTEHGDEKACVDLASSVYKKLKIETRALTNLETVRLL). His604 lines the Zn(2+) pocket.

It belongs to the metallo-beta-lactamase superfamily. RNA-metabolizing metallo-beta-lactamase-like family. FttA subfamily. As to quaternary structure, homodimer. Interacts with RNA polymerase (RNAP), interacts with the Spt4-Spt5 complex. Requires Zn(2+) as cofactor.

Functionally, terminates transcription on the whole genome. Termination is linked to FttA-mediated RNA cleavage and does not require NTP hydrolysis. Cleaves endonucleolytically at the RNA exit channel of RNA polymerase (RNAP); the 5'-3' exonuclease activity of this protein degrades the nascent RNA released from RNAP. In Methanosarcina mazei (strain ATCC BAA-159 / DSM 3647 / Goe1 / Go1 / JCM 11833 / OCM 88) (Methanosarcina frisia), this protein is Transcription termination factor FttA.